The chain runs to 322 residues: tRNA pseudouridine synthase B (322 aa).

Residues 1 to 11 (MRPPRTTELDR) are compositionally biased toward basic and acidic residues. A disordered region spans residues 1 to 22 (MRPPRTTELDRPMTTAASQRPR). Residue Asp-65 is the Nucleophile of the active site.

It belongs to the pseudouridine synthase TruB family. Type 1 subfamily.

It carries out the reaction uridine(55) in tRNA = pseudouridine(55) in tRNA. Responsible for synthesis of pseudouridine from uracil-55 in the psi GC loop of transfer RNAs. This is tRNA pseudouridine synthase B from Burkholderia lata (strain ATCC 17760 / DSM 23089 / LMG 22485 / NCIMB 9086 / R18194 / 383).